The primary structure comprises 262 residues: Insulin-like growth factor-binding protein 1 (262 aa).

A signal peptide spans 1–25; that stretch reads MPEVPAVRAWPLLLSLALQLGAAAG. An IGFBP N-terminal domain is found at 28–108; the sequence is QPLHCAPCSA…TRGQGACMPA (81 aa). Disulfide bonds link Cys-32/Cys-59, Cys-35/Cys-61, Cys-43/Cys-62, Cys-50/Cys-65, Cys-72/Cys-85, and Cys-79/Cys-105. Positions 101-133 are disordered; the sequence is GQGACMPAPSAEATETKDPAAPETTSPESTEMT. The span at 121–131 shows a compositional bias: low complexity; it reads APETTSPESTE. Phosphoserine is present on residues Ser-126, Ser-129, and Ser-147. Phosphotyrosine is present on Tyr-161. A Thyroglobulin type-1 domain is found at 176–254; that stretch reads KEPCQRELYK…STAVRGDPKC (79 aa). Disulfide bonds link Cys-179-Cys-209, Cys-220-Cys-231, and Cys-233-Cys-254. Ser-245 carries the post-translational modification Phosphoserine. A Cell attachment site motif is present at residues 249 to 251; it reads RGD.

As to quaternary structure, binds equally well IGF1 and IGF2. Interacts with integrin ITGA5:ITGB1. Interacts with VHL; this interaction inhibits HIF1A degradation.

It localises to the secreted. In terms of biological role, multifunctional protein that plays a critical role in regulating the availability of IGFs such as IGF1 and IGF2 to their receptors and thereby regulates IGF-mediated cellular processes including cell migration, proliferation, differentiation or apoptosis in a cell-type specific manner. Also plays a positive role in cell migration by interacting with integrin ITGA5:ITGB1 through its RGD motif. Mechanistically, binding to integrins leads to activation of focal adhesion kinase/PTK2 and stimulation of the mitogen-activated protein kinase (MAPK) pathway. Regulates cardiomyocyte apoptosis by suppressing HIF-1alpha/HIF1A degradation through ubiquitination. In Sus scrofa (Pig), this protein is Insulin-like growth factor-binding protein 1 (IGFBP1).